The sequence spans 353 residues: uncharacterized protein (353 aa).

The first 18 residues, 1–18 (MKFVLFAQLAAVAAPAIA), serve as a signal peptide directing secretion. The tract at residues 94 to 119 (EGGNVRRVPGGPSQSARQIGDSSTPM) is disordered. Residues 105–119 (PSQSARQIGDSSTPM) show a composition bias toward polar residues. N-linked (GlcNAc...) asparagine glycosylation is found at N165 and N312.

Belongs to the glycosyl hydrolase 3 family.

It localises to the secreted. This is an uncharacterized protein from Arthroderma benhamiae (strain ATCC MYA-4681 / CBS 112371) (Trichophyton mentagrophytes).